We begin with the raw amino-acid sequence, 452 residues long: FAD transporter (452 aa).

12 consecutive transmembrane segments (helical) span residues 21-41 (LPNL…TFFI), 49-69 (LAAI…AIGV), 96-116 (ALLL…IFIE), 131-151 (LIHD…LLMV), 167-187 (MIMT…IFGI), 199-219 (AIAT…LLII), 248-270 (AALM…AHID), 283-303 (LESV…PFIA), 324-344 (FILV…QPLA), 357-377 (LSFY…VIIF), 392-412 (VINL…GSYI), and 417-437 (GLLL…YYLA).

The protein belongs to the multi antimicrobial extrusion (MATE) (TC 2.A.66.1) family.

The protein localises to the cell inner membrane. Flavin adenine dinucleotide (FAD) transporter that facilitates export of flavin electron shuttles. The protein is FAD transporter of Shewanella oneidensis (strain ATCC 700550 / JCM 31522 / CIP 106686 / LMG 19005 / NCIMB 14063 / MR-1).